Reading from the N-terminus, the 410-residue chain is 3-phosphoshikimate 1-carboxyvinyltransferase (410 aa).

Positions 21, 22, and 26 each coordinate 3-phosphoshikimate. A phosphoenolpyruvate-binding site is contributed by Lys-21. Positions 69 and 97 each coordinate phosphoenolpyruvate. The 3-phosphoshikimate site is built by Ser-143, Ser-144, Gln-145, Ser-171, Asp-288, and Lys-315. A phosphoenolpyruvate-binding site is contributed by Gln-145. Asp-288 serves as the catalytic Proton acceptor. Arg-319, Arg-364, and Lys-389 together coordinate phosphoenolpyruvate.

It belongs to the EPSP synthase family. As to quaternary structure, monomer.

The protein localises to the cytoplasm. The enzyme catalyses 3-phosphoshikimate + phosphoenolpyruvate = 5-O-(1-carboxyvinyl)-3-phosphoshikimate + phosphate. The protein operates within metabolic intermediate biosynthesis; chorismate biosynthesis; chorismate from D-erythrose 4-phosphate and phosphoenolpyruvate: step 6/7. Catalyzes the transfer of the enolpyruvyl moiety of phosphoenolpyruvate (PEP) to the 5-hydroxyl of shikimate-3-phosphate (S3P) to produce enolpyruvyl shikimate-3-phosphate and inorganic phosphate. The chain is 3-phosphoshikimate 1-carboxyvinyltransferase from Bacteroides fragilis (strain YCH46).